The chain runs to 153 residues: Probable phospholipase A2 homolog 2 (153 aa).

Residues 1-25 (MRFFLKLAPRCSVLLLLLLVTASRG) form the signal peptide. Intrachain disulfides connect Cys42/Cys70, Cys46/Cys76, Cys51/Cys123, Cys63/Cys83, Cys82/Cys109, and Cys89/Cys102. Ca(2+) is bound by residues Tyr62, Gly64, and Tyr67. His86 is an active-site residue. Ca(2+) is bound at residue Asp87.

It belongs to the phospholipase A2 family. Ca(2+) is required as a cofactor.

It is found in the secreted. The catalysed reaction is a 1,2-diacyl-sn-glycero-3-phosphocholine + H2O = a 1-acyl-sn-glycero-3-phosphocholine + a fatty acid + H(+). PA2 catalyzes the calcium-dependent hydrolysis of the 2-acyl groups in 3-sn-phosphoglycerides. Releases lysophospholipids (LPLs) and free fatty acids (FFAs) from membrane phospholipids in response to hormones and other external stimuli. The chain is Probable phospholipase A2 homolog 2 (PLA2-II) from Oryza sativa subsp. japonica (Rice).